The primary structure comprises 79 residues: Large ribosomal subunit protein uL22 (79 aa).

It belongs to the universal ribosomal protein uL22 family. As to quaternary structure, part of the 50S ribosomal subunit.

Its function is as follows. This protein binds specifically to 23S rRNA; its binding is stimulated by other ribosomal proteins, e.g. L4, L17, and L20. It is important during the early stages of 50S assembly. It makes multiple contacts with different domains of the 23S rRNA in the assembled 50S subunit and ribosome. Functionally, the globular domain of the protein is located near the polypeptide exit tunnel on the outside of the subunit, while an extended beta-hairpin is found that lines the wall of the exit tunnel in the center of the 70S ribosome. The sequence is that of Large ribosomal subunit protein uL22 (rplV) from Prunus armeniaca phytoplasma.